Reading from the N-terminus, the 436-residue chain is MGQVLPLVTRQGDRIAIVSGLRTPFARQATAFHGIPAVDLGKMVVGELLARSEIPAEVIEQLVFGQVVQMPEAPNIAREIVLGTGMNVHTDAYSVSRACATSFQAVANVAESLMAGTIRAGIAGGADSSSVLPIGVSKKLARVLVDVNKARTMSQRLKLFSRLRLRDLMPVPPAVAEYSTGLRMGDTAEQMAKTYGITREQQDALAHRSHQRAAQAWSDGKLKEEVMTAFIPPYKQPLVEDNNIRGNSSLADYAKLRPAFDRKHGTVTAANSTPLTDGAAAVILMTESRAKELGLVPLGYLRSYAFTAIDVWQDMLLGPAWSTPLALERAGLTMSDLTLIDMHEAFAAQTLANIQLLGSERFAREALGRAHATGEVDDSKFNVLGGSIAYGHPFAATGARMITQTLHELRRRGGGFGLVTACAAGGLGAAMVLEAE.

C99 acts as the Acyl-thioester intermediate in catalysis. Residues H392 and C422 each act as proton acceptor in the active site.

This sequence belongs to the thiolase-like superfamily. Thiolase family. In terms of assembly, heterotetramer of two alpha chains (FadJ) and two beta chains (FadI).

The protein localises to the cytoplasm. It catalyses the reaction an acyl-CoA + acetyl-CoA = a 3-oxoacyl-CoA + CoA. It functions in the pathway lipid metabolism; fatty acid beta-oxidation. In terms of biological role, catalyzes the final step of fatty acid oxidation in which acetyl-CoA is released and the CoA ester of a fatty acid two carbons shorter is formed. This chain is 3-ketoacyl-CoA thiolase, found in Escherichia coli (strain K12 / MC4100 / BW2952).